We begin with the raw amino-acid sequence, 543 residues long: Ipecac alkaloid beta-glucosidase 2 (543 aa).

A beta-D-glucoside-binding positions include Q36, H140, 185–186 (NE), Y350, E422, W471, and F487. The active-site Proton donor is E186. E422 acts as the Nucleophile in catalysis.

It belongs to the glycosyl hydrolase 1 family.

Its subcellular location is the cytoplasm. The protein localises to the cytosol. It catalyses the reaction deacetylipecoside + H2O = deacetylipecoside aglycone + D-glucose. The catalysed reaction is deacetylisoipecoside + H2O = deacetylisoipecoside aglycone + D-glucose. Its pathway is alkaloid biosynthesis. Its function is as follows. Beta-glucosidase catalyzing deglucosylation on N-deacetylisoipecoside and N-deacetylipecoside. The sequence is that of Ipecac alkaloid beta-glucosidase 2 from Carapichea ipecacuanha (Ipecac).